A 411-amino-acid chain; its full sequence is BRO1 domain-containing protein BROX (411 aa).

The BRO1 domain occupies 90–395 (FKWTDTLQGN…PKKEEEVKPM (306 aa)). The interval 362-411 (TSQWSPETHTGFDLTKRPKDDSAKPKKEEEVKPMKEPDIKPQKDSGCQIS) is disordered. The segment covering 375–404 (LTKRPKDDSAKPKKEEEVKPMKEPDIKPQK) has biased composition (basic and acidic residues). Residue Cys-408 is modified to Cysteine methyl ester. The S-farnesyl cysteine moiety is linked to residue Cys-408. The propeptide at 409–411 (QIS) is removed in mature form.

It belongs to the BROX family. Farnesylation is required for nuclear envelope localization.

Its subcellular location is the nucleus membrane. Its function is as follows. Nuclear envelope-associated factor that is involved in the nuclear envelope ruptures during interphase (NERDI) repair. In Xenopus tropicalis (Western clawed frog), this protein is BRO1 domain-containing protein BROX.